Here is a 512-residue protein sequence, read N- to C-terminus: NAD(P)H-quinone oxidoreductase chain 4, chloroplastic (512 aa).

Transmembrane regions (helical) follow at residues 4 to 24, 34 to 54, 87 to 107, 111 to 131, 134 to 154, 167 to 187, 208 to 228, 242 to 262, 274 to 294, 308 to 328, 330 to 350, 374 to 396, 417 to 437, and 462 to 482; these read VPWL…IPLL, WYAL…FGCY, IGLI…AWPV, PKLF…LFAS, ILLF…LLSM, FILY…TASL, GLEI…LPAF, HYST…YGFI, TVFA…AALV, SSVS…DLGL, GAML…FLAG, MFAM…GFVS, IITL…LSMV, and VFVL…PNFA.

It belongs to the complex I subunit 4 family.

The protein localises to the plastid. The protein resides in the chloroplast thylakoid membrane. The catalysed reaction is a plastoquinone + NADH + (n+1) H(+)(in) = a plastoquinol + NAD(+) + n H(+)(out). It carries out the reaction a plastoquinone + NADPH + (n+1) H(+)(in) = a plastoquinol + NADP(+) + n H(+)(out). This chain is NAD(P)H-quinone oxidoreductase chain 4, chloroplastic, found in Zygnema circumcarinatum (Green alga).